A 304-amino-acid polypeptide reads, in one-letter code: Oxidoreductase calM (304 aa).

Ile-26, Thr-45, Asp-68, and Asn-98 together coordinate NADP(+). Ser-152 acts as the Proton donor in catalysis. 4 residues coordinate NADP(+): Tyr-166, Lys-170, Val-200, and Thr-202. Tyr-166 serves as the catalytic Proton acceptor. Catalysis depends on Lys-170, which acts as the Lowers pKa of active site Tyr.

It belongs to the short-chain dehydrogenases/reductases (SDR) family.

It functions in the pathway secondary metabolite biosynthesis. In terms of biological role, oxidoreductase; part of the gene cluster that mediates the biosynthesis of calbistrin A and related compounds. Calbistrin A is a secondary metabolite with an interesting structure that was recently found to have bioactivity against leukemia cells. It consists of two polyketides linked by an ester bond: a bicyclic decalin containing polyketide and a linear 12 carbon dioic acid structure. The polyketide synthase calA is probably responsible for forming the decalin moiety. Because calA lacks a designated enoylreductase (ER) domain, the required activity is provided by the trans-enoyl reductase calK. Following release from the PKS, calF then probably catalyzes the oxidation and the subsequent Diels Alder cycloisomerization that lead to the formation of the decalin moiety. The decalin polyketide backbone includes two C-methyl groups, at C7 and C11 in backbone, of which the C7 position is probably methylated by the methyltransferase domain of calA. A candidate for adding the methyl group at C11, if not done by CalA, is the cluster methyltransferase calH. Several additional tailoring enzymes within the cluster could be involved in the modification of the decalin polyketide product. Those include the 3 cytochrome P450 monooxygenases CalE, CalG and CalL, of which one might be responsible for the introduction of the extra hydroxyl group attached to the backbone of the decalin moiety, at position C9 in the backbone, that allows for attachment of the linear moiety. One tailoring enzyme activity that is expected to be involved in biosynthesis of calbistrin is an acyltransferase for connecting the two polyketide synthase products, and which could be performed by the cluster acyltransferase calJ. The enzyme responsible for the biosynthesis of the linear moiety, probably a second PKS, has not been identified yet. The polypeptide is Oxidoreductase calM (Penicillium decumbens).